Here is a 78-residue protein sequence, read N- to C-terminus: Large ribosomal subunit protein bL28 (78 aa).

This sequence belongs to the bacterial ribosomal protein bL28 family.

The polypeptide is Large ribosomal subunit protein bL28 (Prochlorococcus marinus (strain MIT 9312)).